Consider the following 222-residue polypeptide: Oligoribonuclease (222 aa).

The interval 19–38 is disordered; the sequence is PMASSSSTGKQEESVNGSLE. Residues 21–35 show a composition bias toward polar residues; it reads ASSSSTGKQEESVNG. The Exonuclease domain occupies 46–210; sequence LVWIDLEMTG…DDIRESIKEL (165 aa). Histidine 167 is a catalytic residue.

Belongs to the oligoribonuclease family.

Its function is as follows. 3'-to-5' exoribonuclease specific for small oligoribonucleotides. This Arabidopsis thaliana (Mouse-ear cress) protein is Oligoribonuclease.